A 746-amino-acid chain; its full sequence is MEGPEITAAEAVIDNGSFGTRTIRFETGRLAKQAAGSAAVYLDGESFLLSATTAGKSPKDQFDFFPLTVDVEERSYAAGKIPGSFFRREGRPSTEAILTCRLIDRPLRPSFVKGLRNEVQVVVSVMALHPDDAYDVVAINVASLSTQLSGLPFSGPIGGVRIALIDGQWVAFPRYSELERAVFDMVVAGRVVTTADGSQDVAIMMVEAEATEGSWNLIKDQGATAPTEEVVAAGLEAAKPFIAELVRAQAEVAATAAKPTAAFPTFPDYQDDVYQAVFEAASADLTAALQIGGKQDRETRIDEVKEAVKAQLADAFAGREKEVSAAYRSVQKALIRQRVLKDGVRIDGRGLADIRTLSAEVEVLPRVHGSALFERGETQILGVTTLNMLRMEQQLDTLSPVTRKRYMHNYNFPPYSTGETGRVGSPKRREIGHGALAERALVPVLPAREDFPYAIRQVSEALGSNGSTSMGSVCASTLSLLNAGVPLRAAVAGIAMGLISDTVDGETRYAALTDILGAEDAFGDMDFKVAGTKEFVTAIQLDTKLDGIPASVLAGALTQARDARLHILDVMAEAIDAPDEMSPTAPRIITVKVPVDKIGEVIGPKGKMINQIQEDTGADISIEDDGTVFIGAVDGPSAEAARAAVNAIANPTMPEVGERYLGTVVKTTTFGAFVSLMPGKDGLLHISQLRKLSGGKRVDNVEDVVAVGQKVQVEIAEIDPRGKLSLVPVVAEEASAEAAAAEPADA.

Residues Asp-520 and Asp-526 each coordinate Mg(2+). Residues 586-648 form the KH domain; the sequence is PRIITVKVPV…EAARAAVNAI (63 aa). The S1 motif domain occupies 657–729; sequence GERYLGTVVK…PRGKLSLVPV (73 aa).

This sequence belongs to the polyribonucleotide nucleotidyltransferase family. Mg(2+) serves as cofactor.

It is found in the cytoplasm. The catalysed reaction is RNA(n+1) + phosphate = RNA(n) + a ribonucleoside 5'-diphosphate. Involved in mRNA degradation. Catalyzes the phosphorolysis of single-stranded polyribonucleotides processively in the 3'- to 5'-direction. This chain is Polyribonucleotide nucleotidyltransferase, found in Kineococcus radiotolerans (strain ATCC BAA-149 / DSM 14245 / SRS30216).